The following is a 403-amino-acid chain: Arginine biosynthesis bifunctional protein ArgJ (403 aa).

Positions 1 to 11 are enriched in polar residues; the sequence is MVQSVLSSTSH. Positions 1-21 are disordered; that stretch reads MVQSVLSSTSHGSERADMSAA. Threonine 161, lysine 183, threonine 194, glutamate 273, asparagine 398, and threonine 403 together coordinate substrate. Residue threonine 194 is the Nucleophile of the active site.

The protein belongs to the ArgJ family. Heterotetramer of two alpha and two beta chains.

Its subcellular location is the cytoplasm. The catalysed reaction is N(2)-acetyl-L-ornithine + L-glutamate = N-acetyl-L-glutamate + L-ornithine. The enzyme catalyses L-glutamate + acetyl-CoA = N-acetyl-L-glutamate + CoA + H(+). The protein operates within amino-acid biosynthesis; L-arginine biosynthesis; L-ornithine and N-acetyl-L-glutamate from L-glutamate and N(2)-acetyl-L-ornithine (cyclic): step 1/1. Its pathway is amino-acid biosynthesis; L-arginine biosynthesis; N(2)-acetyl-L-ornithine from L-glutamate: step 1/4. Its function is as follows. Catalyzes two activities which are involved in the cyclic version of arginine biosynthesis: the synthesis of N-acetylglutamate from glutamate and acetyl-CoA as the acetyl donor, and of ornithine by transacetylation between N(2)-acetylornithine and glutamate. The chain is Arginine biosynthesis bifunctional protein ArgJ from Rhodococcoides fascians (Rhodococcus fascians).